A 246-amino-acid chain; its full sequence is UDP-2,3-diacylglucosamine hydrolase (246 aa).

Residues aspartate 8, histidine 10, aspartate 41, asparagine 79, and histidine 114 each coordinate Mn(2+). Substrate is bound at residue 79–80 (NR). Residues aspartate 122, serine 160, lysine 164, lysine 167, and histidine 195 each coordinate substrate. The Mn(2+) site is built by histidine 195 and histidine 197.

The protein belongs to the LpxH family. Mn(2+) is required as a cofactor.

The protein localises to the cell inner membrane. The enzyme catalyses UDP-2-N,3-O-bis[(3R)-3-hydroxytetradecanoyl]-alpha-D-glucosamine + H2O = 2-N,3-O-bis[(3R)-3-hydroxytetradecanoyl]-alpha-D-glucosaminyl 1-phosphate + UMP + 2 H(+). It participates in glycolipid biosynthesis; lipid IV(A) biosynthesis; lipid IV(A) from (3R)-3-hydroxytetradecanoyl-[acyl-carrier-protein] and UDP-N-acetyl-alpha-D-glucosamine: step 4/6. Functionally, hydrolyzes the pyrophosphate bond of UDP-2,3-diacylglucosamine to yield 2,3-diacylglucosamine 1-phosphate (lipid X) and UMP by catalyzing the attack of water at the alpha-P atom. Involved in the biosynthesis of lipid A, a phosphorylated glycolipid that anchors the lipopolysaccharide to the outer membrane of the cell. The protein is UDP-2,3-diacylglucosamine hydrolase of Tolumonas auensis (strain DSM 9187 / NBRC 110442 / TA 4).